A 179-amino-acid polypeptide reads, in one-letter code: Large ribosomal subunit protein uL6 (179 aa).

It belongs to the universal ribosomal protein uL6 family. In terms of assembly, part of the 50S ribosomal subunit.

Functionally, this protein binds to the 23S rRNA, and is important in its secondary structure. It is located near the subunit interface in the base of the L7/L12 stalk, and near the tRNA binding site of the peptidyltransferase center. This Synechococcus sp. (strain WH7803) protein is Large ribosomal subunit protein uL6.